Here is a 469-residue protein sequence, read N- to C-terminus: Adenosylhomocysteinase (469 aa).

3 residues coordinate substrate: Thr63, Asp139, and Glu164. 165–167 contributes to the NAD(+) binding site; sequence TTT. Substrate is bound by residues Lys194 and Asp198. NAD(+) is bound by residues Asn199, 228–233, Glu251, Asn300, 321–323, and Asn375; these read GYGDVG and IGH.

Belongs to the adenosylhomocysteinase family. NAD(+) is required as a cofactor.

It localises to the cytoplasm. It catalyses the reaction S-adenosyl-L-homocysteine + H2O = L-homocysteine + adenosine. Its pathway is amino-acid biosynthesis; L-homocysteine biosynthesis; L-homocysteine from S-adenosyl-L-homocysteine: step 1/1. In terms of biological role, may play a key role in the regulation of the intracellular concentration of adenosylhomocysteine. This Pseudomonas putida (strain GB-1) protein is Adenosylhomocysteinase.